The following is a 725-amino-acid chain: Aminopeptidase RNPEPL1 (725 aa).

Residue 326–330 (VAMEN) participates in substrate binding. His353 is a binding site for Zn(2+). The Proton acceptor role is filled by Glu354. 2 residues coordinate Zn(2+): His357 and Glu376. The disordered stretch occupies residues 676–699 (GLGSSTEPASEPSTELGKAEADTD). A compositionally biased stretch (low complexity) spans 679–690 (SSTEPASEPSTE).

It belongs to the peptidase M1 family. Zn(2+) serves as cofactor. In terms of tissue distribution, ubiquitously expressed. Expressed at relatively higher levels in heart and skeletal muscle.

It catalyses the reaction Release of N-terminal amino acids, preferentially methionine, from peptides and arylamides.. With respect to regulation, inhibited by calcium but not affected by chloride ions. Inhibited by amastatin and to a lower extent by bestatin. Weakly inhibited by puromycin. Broad specificity aminopeptidase which preferentially hydrolyzes an N-terminal methionine, citrulline or glutamine. The chain is Aminopeptidase RNPEPL1 from Homo sapiens (Human).